A 135-amino-acid chain; its full sequence is MWAYIFGAVCPRKGKGAGLVLPYCDTEAMQEHLAEIGRSVDDGAHAVLILDQAGWHVTPKLKVPDNITLMFLPPRSPELNPVENVWQFMRDNWLSNRIFKDYDDIVTHCCAAWNKLVDQPWKIMSIGLREWAHRS.

This is an uncharacterized protein from Sinorhizobium fredii (strain NBRC 101917 / NGR234).